The sequence spans 3739 residues: Pikromycin polyketide synthase component PikAII (3739 aa).

The Ketosynthase family 3 (KS3) 1 domain occupies 35-463 (GEPVAIVGMA…GTNAHVVLEE (429 aa)). Module stretches follow at residues 38-1517 (VAIV…EFLL) and 1542-3642 (VAIV…GHLL). Cys-208 functions as the Acyl-thioester intermediate; for beta-ketoacyl synthase 1 activity in the catalytic mechanism. Residues His-343 and His-383 each act as for beta-ketoacyl synthase 1 activity in the active site. Positions 572 to 877 (FVFPGQGTQW…ERLVTSLAEA (306 aa)) are acyltransferase 1. The Acyl-ester intermediate; for acyltransferase 1 activity role is filled by Ser-662. Residues 1150–1343 (GTVLVTGAEE…VTSVAWSPWE (194 aa)) are C2-type beta-ketoacyl reductase 1. Residue Tyr-1313 is the For C2-type beta-ketoacyl reductase 1 and probable racemase activities of the active site. Residues 1445–1520 (RRMQELVREH…TLAEFLLAEI (76 aa)) enclose the Carrier 1 domain. At Ser-1480 the chain carries O-(pantetheine 4'-phosphoryl)serine. The 429-residue stretch at 1539-1967 (DEPVAIVGMA…GTNAHIVLEE (429 aa)) folds into the Ketosynthase family 3 (KS3) 2 domain. Cys-1712 serves as the catalytic Acyl-thioester intermediate; for beta-ketoacyl synthase 2 activity. Residues His-1847 and His-1887 each act as for beta-ketoacyl synthase 2 activity in the active site. The acyltransferase 2 stretch occupies residues 2069–2374 (FVFPGQGTQW…HRLTTSLAEA (306 aa)). Ser-2159 (acyl-ester intermediate; for acyltransferase 2 activity) is an active-site residue. The tract at residues 2428-2553 (HPLLGAAVAL…GVLAARADRT (126 aa)) is N-terminal hotdog fold. The dehydratase stretch occupies residues 2428 to 2703 (HPLLGAAVAL…LTVLPVDPAQ (276 aa)). Residues 2428–2705 (HPLLGAAVAL…VLPVDPAQLA (278 aa)) enclose the PKS/mFAS DH domain. Catalysis depends on His-2460, which acts as the Proton acceptor; for dehydratase activity. The C-terminal hotdog fold stretch occupies residues 2567–2705 (AEPVDVDGLY…VLPVDPAQLA (139 aa)). Asp-2629 serves as the catalytic Proton donor; for dehydratase activity. The tract at residues 2959–3267 (GSLESLTAAP…QARHTGKVVL (309 aa)) is enoyl reductase. Tyr-3005 functions as the For enoyl reductase activity in the catalytic mechanism. NADP(+) is bound by residues 3092 to 3109 (LLVHSAAGGVGMAAVQLA), 3285 to 3288 (TGAL), 3309 to 3312 (SRRG), 3338 to 3339 (DV), Lys-3388, and 3412 to 3413 (FS). The tract at residues 3277 to 3458 (GTVLLTGGTG…LSLGWGLWAE (182 aa)) is beta-ketoacyl reductase 2. Tyr-3427 serves as the catalytic For beta-ketoacyl reductase 2 activity. In terms of domain architecture, Carrier 2 spans 3570–3645 (AHLRDLVRTH…ELAGHLLDEL (76 aa)). Ser-3605 carries the O-(pantetheine 4'-phosphoryl)serine modification.

In terms of assembly, homodimer. Pikromycin PKS consists of a combination of multimodular (PikAI and PikAII) and monomodular (PikAIII and PikAIV) polypeptides each coding for a functional synthase subunit which participates in 1 (monomodular) or 2 (multimodular) of the six FAS-like elongation steps required for formation of the polyketide. Module 1, 2, 3, 4, 5, and 6 participating in biosynthesis steps 1, 2, 3, 4, 5, and 6, respectively. It depends on pantetheine 4'-phosphate as a cofactor.

It catalyses the reaction 5 (S)-methylmalonyl-CoA + malonyl-CoA + 5 NADPH + 11 H(+) = 10-deoxymethynolide + 6 CO2 + 5 NADP(+) + 6 CoA + 2 H2O. The enzyme catalyses 6 (S)-methylmalonyl-CoA + malonyl-CoA + 5 NADPH + 12 H(+) = narbonolide + 7 CO2 + 5 NADP(+) + 7 CoA + 2 H2O. The protein operates within antibiotic biosynthesis. In terms of biological role, involved in the biosynthesis of 12- and 14-membered ring macrolactone antibiotics such as methymycin/neomethymycin and pikromycin/narbomycin, respectively. Component of the pikromycin PKS which catalyzes the biosynthesis of both precursors 10-deoxymethynolide (12-membered ring macrolactone) and narbonolide (14-membered ring macrolactone). Chain elongation through PikAI, PikAII and PikAIII followed by thioesterase catalyzed termination results in the production of 10-deoxymethynolide, while continued elongation through PikAIV, followed by thioesterase (TE) catalyzed cyclization results in the biosynthesis of the narbonolide. The protein is Pikromycin polyketide synthase component PikAII of Streptomyces venezuelae.